Here is a 239-residue protein sequence, read N- to C-terminus: Uridylate kinase (239 aa).

10–13 (KLSG) contacts ATP. The involved in allosteric activation by GTP stretch occupies residues 18–23 (GEDGYG). UMP is bound at residue glycine 52. The ATP site is built by glycine 53 and arginine 57. UMP is bound by residues aspartate 72 and 133–140 (TGNPYFTT). ATP-binding residues include threonine 160, tyrosine 166, and aspartate 169.

This sequence belongs to the UMP kinase family. Homohexamer.

Its subcellular location is the cytoplasm. The enzyme catalyses UMP + ATP = UDP + ADP. The protein operates within pyrimidine metabolism; CTP biosynthesis via de novo pathway; UDP from UMP (UMPK route): step 1/1. Its activity is regulated as follows. Allosterically activated by GTP. Inhibited by UTP. Its function is as follows. Catalyzes the reversible phosphorylation of UMP to UDP. This chain is Uridylate kinase, found in Chlorobium chlorochromatii (strain CaD3).